We begin with the raw amino-acid sequence, 371 residues long: Aspartate-semialdehyde dehydrogenase (371 aa).

Residues 11–14, 38–39, and Gln-75 each bind NADP(+); these read RGMV and TS. Arg-104 serves as a coordination point for phosphate. Cys-137 functions as the Acyl-thioester intermediate in the catalytic mechanism. Gln-164 is a substrate binding site. 167-168 is a binding site for NADP(+); that stretch reads SG. Glu-243 serves as a coordination point for substrate. Residue Lys-246 participates in phosphate binding. Residue Arg-269 participates in substrate binding. His-276 functions as the Proton acceptor in the catalytic mechanism. Residue Gln-352 participates in NADP(+) binding.

This sequence belongs to the aspartate-semialdehyde dehydrogenase family. As to quaternary structure, homodimer.

It carries out the reaction L-aspartate 4-semialdehyde + phosphate + NADP(+) = 4-phospho-L-aspartate + NADPH + H(+). It participates in amino-acid biosynthesis; L-lysine biosynthesis via DAP pathway; (S)-tetrahydrodipicolinate from L-aspartate: step 2/4. It functions in the pathway amino-acid biosynthesis; L-methionine biosynthesis via de novo pathway; L-homoserine from L-aspartate: step 2/3. The protein operates within amino-acid biosynthesis; L-threonine biosynthesis; L-threonine from L-aspartate: step 2/5. In terms of biological role, catalyzes the NADPH-dependent formation of L-aspartate-semialdehyde (L-ASA) by the reductive dephosphorylation of L-aspartyl-4-phosphate. The protein is Aspartate-semialdehyde dehydrogenase of Buchnera aphidicola subsp. Schizaphis graminum (strain Sg).